Reading from the N-terminus, the 536-residue chain is Putative UDP-glucuronosyltransferase ugt-47 (536 aa).

Residues 1 to 21 (MMLQTSTILQLLLFLVGSVSA) form the signal peptide. Residues N52 and N308 are each glycosylated (N-linked (GlcNAc...) asparagine). Residues 497 to 517 (IIVPVLFVLLYCLIIPFFKLI) traverse the membrane as a helical segment.

This sequence belongs to the UDP-glycosyltransferase family.

The protein localises to the membrane. It catalyses the reaction glucuronate acceptor + UDP-alpha-D-glucuronate = acceptor beta-D-glucuronoside + UDP + H(+). The sequence is that of Putative UDP-glucuronosyltransferase ugt-47 (ugt-47) from Caenorhabditis briggsae.